Here is a 247-residue protein sequence, read N- to C-terminus: Calpain small subunit 2 (247 aa).

Positions 88, 91, 93, 131, 133, 135, 137, 142, 161, 163, 165, and 204 each coordinate Ca(2+). 4 consecutive EF-hand domains span residues 118-151 (FSLD…NNIK), 148-183 (NNIK…AGFQ), 184-212 (LNEQ…ISCL), and 213-247 (VRLD…TMYS).

In terms of assembly, heterodimer of a large (catalytic) and a small (regulatory) subunit.

The protein resides in the cytoplasm. It is found in the cell membrane. Calcium-regulated non-lysosomal thiol-protease which catalyzes limited proteolysis of substrates involved in cytoskeletal remodeling and signal transduction. This small subunit may act as a tissue-specific chaperone of the large subunit, possibly by helping it fold into its correct conformation for activity. This chain is Calpain small subunit 2 (Capns2), found in Mus musculus (Mouse).